The following is a 752-amino-acid chain: Granule-bound starch synthase 2, chloroplastic/amyloplastic (752 aa).

A chloroplast-targeting transit peptide spans 1–57 (MMLSLGSDATVLPFHAKNLKFTPKLSTLNGDLAFSKGLGVGRLNCGSVRLNHKQHVR). Disordered regions lie at residues 116 to 146 (LEGN…SGSA) and 224 to 253 (FENF…EKPP). Lysine 275 provides a ligand contact to ADP-alpha-D-glucose.

The protein belongs to the glycosyltransferase 1 family. Bacterial/plant glycogen synthase subfamily. In terms of tissue distribution, widely expressed.

The protein resides in the plastid. Its subcellular location is the chloroplast. It localises to the amyloplast. It catalyses the reaction [(1-&gt;4)-alpha-D-glucosyl](n) + ADP-alpha-D-glucose = [(1-&gt;4)-alpha-D-glucosyl](n+1) + ADP + H(+). Its pathway is glycan biosynthesis; starch biosynthesis. This Pisum sativum (Garden pea) protein is Granule-bound starch synthase 2, chloroplastic/amyloplastic.